The following is a 398-amino-acid chain: Acetate kinase 1 (398 aa).

Asn-10 contacts Mg(2+). Lys-17 serves as a coordination point for ATP. Arg-89 contacts substrate. The active-site Proton donor/acceptor is Asp-146. ATP-binding positions include 206–210 (HLGNG), 281–283 (DCR), and 329–333 (GIGEN). A Mg(2+)-binding site is contributed by Glu-384.

The protein belongs to the acetokinase family. Homodimer. It depends on Mg(2+) as a cofactor. Mn(2+) is required as a cofactor.

It localises to the cytoplasm. It catalyses the reaction acetate + ATP = acetyl phosphate + ADP. It participates in metabolic intermediate biosynthesis; acetyl-CoA biosynthesis; acetyl-CoA from acetate: step 1/2. Functionally, catalyzes the formation of acetyl phosphate from acetate and ATP. Can also catalyze the reverse reaction. The protein is Acetate kinase 1 of Neisseria meningitidis serogroup B (strain ATCC BAA-335 / MC58).